We begin with the raw amino-acid sequence, 263 residues long: Purine nucleoside phosphorylase SAV1187 (263 aa).

Histidine 79, cysteine 124, and histidine 141 together coordinate Zn(2+).

This sequence belongs to the purine nucleoside phosphorylase YfiH/LACC1 family. In terms of assembly, homodimer. The cofactor is Cu(2+). Zn(2+) serves as cofactor.

The enzyme catalyses adenosine + phosphate = alpha-D-ribose 1-phosphate + adenine. The catalysed reaction is S-methyl-5'-thioadenosine + phosphate = 5-(methylsulfanyl)-alpha-D-ribose 1-phosphate + adenine. It carries out the reaction inosine + phosphate = alpha-D-ribose 1-phosphate + hypoxanthine. It catalyses the reaction adenosine + H2O + H(+) = inosine + NH4(+). Its function is as follows. Purine nucleoside enzyme that catalyzes the phosphorolysis of adenosine and inosine nucleosides, yielding D-ribose 1-phosphate and the respective free bases, adenine and hypoxanthine. Also catalyzes the phosphorolysis of S-methyl-5'-thioadenosine into adenine and S-methyl-5-thio-alpha-D-ribose 1-phosphate. Also has adenosine deaminase activity. The sequence is that of Purine nucleoside phosphorylase SAV1187 from Staphylococcus aureus (strain Mu50 / ATCC 700699).